Reading from the N-terminus, the 247-residue chain is Flagellar brake protein YcgR 2 (247 aa).

Residues glutamine 124–alanine 237 form the PilZ domain.

Belongs to the YcgR family. As to quaternary structure, monomer. Interacts with the flagellar basal bodies.

Its subcellular location is the bacterial flagellum basal body. Functionally, acts as a flagellar brake, regulating swimming and swarming in a bis-(3'-5') cyclic diguanylic acid (c-di-GMP)-dependent manner. Binds 1 c-di-GMP dimer per subunit. Increasing levels of c-di-GMP lead to decreased motility. The protein is Flagellar brake protein YcgR 2 of Dechloromonas aromatica (strain RCB).